Here is a 1050-residue protein sequence, read N- to C-terminus: Probable efflux pump membrane transporter TtgB (1050 aa).

The next 12 helical transmembrane spans lie at 10-30, 339-359, 370-390, 393-413, 440-460, 472-492, 539-559, 871-891, 893-913, 923-943, 972-992, and 1004-1024; these read IFAWVIALVIMLVGALSILKL, GVIHTLIEAVVLVFLVMYLFL, MTVPVVLLGTFGILAAAGFSI, LTMFAMVLAIGLLVDDAIVVV, GALVGIALVLSAVLLPMAFFG, ITIVSAMGLSVLVALIFTPAL, VPFLLAYALIVVGMIWLFARI, MPALFALSVLFVFLCLAALYE, WSIPIAVVLVVPLGIIGALIA, VYFLVGLLTTIGLAAKNAILI, IIMTSLAFILGVVPLTIASGA, and VIGGMISATVLAIFWVPLFFV.

Belongs to the resistance-nodulation-cell division (RND) (TC 2.A.6) family.

It localises to the cell inner membrane. In terms of biological role, probable membrane transporter component of the TtgABC efflux pump with unknown specificity. The protein is Probable efflux pump membrane transporter TtgB (ttgB) of Pseudomonas putida (strain ATCC 47054 / DSM 6125 / CFBP 8728 / NCIMB 11950 / KT2440).